A 188-amino-acid polypeptide reads, in one-letter code: Elongation factor P (188 aa).

At Lys34 the chain carries N6-(3,6-diaminohexanoyl)-5-hydroxylysine.

The protein belongs to the elongation factor P family. May be beta-lysylated on the epsilon-amino group of Lys-34 by the combined action of EpmA and EpmB, and then hydroxylated on the C5 position of the same residue by EpmC (if this protein is present). Lysylation is critical for the stimulatory effect of EF-P on peptide-bond formation. The lysylation moiety may extend toward the peptidyltransferase center and stabilize the terminal 3-CCA end of the tRNA. Hydroxylation of the C5 position on Lys-34 may allow additional potential stabilizing hydrogen-bond interactions with the P-tRNA.

It is found in the cytoplasm. It participates in protein biosynthesis; polypeptide chain elongation. Functionally, involved in peptide bond synthesis. Alleviates ribosome stalling that occurs when 3 or more consecutive Pro residues or the sequence PPG is present in a protein, possibly by augmenting the peptidyl transferase activity of the ribosome. Modification of Lys-34 is required for alleviation. This Hamiltonella defensa subsp. Acyrthosiphon pisum (strain 5AT) protein is Elongation factor P.